Consider the following 92-residue polypeptide: Major allergen I polypeptide chain 1 (92 aa).

Residues 1 to 22 (MKGACVLVLLWAALLLISGGNC) form the signal peptide.

It belongs to the secretoglobin family. Heterotetramer composed of two non-covalently linked disulfide-linked heterodimer of chains 1 and 2. Saliva and sebaceous glands.

Its subcellular location is the secreted. This chain is Major allergen I polypeptide chain 1 (CH1), found in Felis catus (Cat).